Here is a 239-residue protein sequence, read N- to C-terminus: Yolk ferritin (239 aa).

The first 18 residues, 1 to 18 (MNSVLFLTLAVCSSLAYG), serve as a signal peptide directing secretion. Residues 27–217 (QNYKENINQL…HAITRLRSFE (191 aa)) form the Ferritin-like diiron domain. Positions 44 and 79 each coordinate Fe cation. The insertion; not present in other ferritins stretch occupies residues 105 to 146 (KDACETVMKFVTSDTSGLEEFRDRRMCICGFVATKTINDNCG). The Fe cation site is built by glutamate 165 and glutamine 199.

Belongs to the ferritin family. Oligomer of 12 or 24 subunits. The functional molecule is roughly spherical and contains a central cavity into which the polymeric ferric iron core is deposited. Midgut gland and bloodstream.

It localises to the secreted. It carries out the reaction 4 Fe(2+) + O2 + 4 H(+) = 4 Fe(3+) + 2 H2O. Stores iron in a soluble, non-toxic, readily available form. Important for iron homeostasis. Has ferroxidase activity. Iron is taken up in the ferrous form and deposited as ferric hydroxides after oxidation. This Lymnaea stagnalis (Great pond snail) protein is Yolk ferritin.